Reading from the N-terminus, the 882-residue chain is Alanine--tRNA ligase (882 aa).

4 residues coordinate Zn(2+): H574, H578, C682, and H686. Positions G853–P882 are disordered. Residues G854 to L868 are compositionally biased toward gly residues.

The protein belongs to the class-II aminoacyl-tRNA synthetase family. It depends on Zn(2+) as a cofactor.

It is found in the cytoplasm. It catalyses the reaction tRNA(Ala) + L-alanine + ATP = L-alanyl-tRNA(Ala) + AMP + diphosphate. Catalyzes the attachment of alanine to tRNA(Ala) in a two-step reaction: alanine is first activated by ATP to form Ala-AMP and then transferred to the acceptor end of tRNA(Ala). Also edits incorrectly charged Ser-tRNA(Ala) and Gly-tRNA(Ala) via its editing domain. The polypeptide is Alanine--tRNA ligase (Thermus thermophilus (strain ATCC BAA-163 / DSM 7039 / HB27)).